The sequence spans 260 residues: Emerin (260 aa).

N-acetylmethionine is present on methionine 1. The LEM domain maps to 1–45 (MDDYAVLSDTELAAVLRQYNIPHGPILGSTRKLYEKKIFEYETQR). A phosphoserine mark is found at serine 8 and serine 29. The interaction with F-actin stretch occupies residues 46–224 (RRLSPPSSSS…PTAALGQDRQ (179 aa)). Serine 49 is subject to Phosphoserine; by PKA. 8 positions are modified to phosphoserine: serine 54, serine 69, serine 72, serine 88, serine 99, serine 142, serine 143, and serine 144. Tyrosine 162 carries the post-translational modification Phosphotyrosine. Residues 169–188 (RPISNVSRSSLGLSYYPRSS) are interaction with CTNNB1. 3 positions are modified to phosphoserine: serine 172, serine 175, and serine 177. The interval 184 to 206 (YPRSSTSSVSSSSSSPSSWLTRR) is disordered. Positions 187–201 (SSTSSVSSSSSSPSS) are enriched in low complexity. The helical transmembrane segment at 225–245 (VPLWGQLLLFLAFATFLLFVY) threads the bilayer.

Interacts with lamins A and C, BANF1, GMCL, BCLAF1 and YTHDC1/YT521. Interacts with TMEM43; the interaction retains emerin in the inner nuclear membrane. Interacts with ACTB, SPTAN1, F-actin, CTNNB1 and beta-tubulin. Interacts with SUN1 and SUN2. Interacts with TMEM201. Interacts with NEMP1.

The protein localises to the nucleus inner membrane. It is found in the nucleus outer membrane. Functionally, stabilizes and promotes the formation of a nuclear actin cortical network. Stimulates actin polymerization in vitro by binding and stabilizing the pointed end of growing filaments. Inhibits beta-catenin activity by preventing its accumulation in the nucleus. Acts by influencing the nuclear accumulation of beta-catenin through a CRM1-dependent export pathway. Links centrosomes to the nuclear envelope via a microtubule association. Required for proper localization of non-farnesylated prelamin-A/C. Together with NEMP1, contributes to nuclear envelope stiffness in germ cells. The polypeptide is Emerin (Emd) (Rattus norvegicus (Rat)).